The following is a 1271-amino-acid chain: Breakpoint cluster region protein (1271 aa).

Met-1 bears the N-acetylmethionine mark. Residues 1–426 (MVDPVGFAEA…DGEGAFHGDA (426 aa)) are kinase. Residues 28–55 (VGDIEQELERCKASIRRLEQEVNQERFR) are a coiled coil. The disordered stretch occupies residues 67–173 (KKSYDRQRWG…GHGQPGADAE (107 aa)). The segment covering 87 to 105 (ASEPRASASRPQPAPADGA) has biased composition (low complexity). Phosphoserine is present on Ser-122. Positions 123–138 (PGKARPGTARRPGAAA) are enriched in low complexity. The residue at position 139 (Ser-139) is a Phosphoserine. Tyr-177 is modified (phosphotyrosine; by HCK). Positions 185–198 (ERGLVKVNDKEVSD) are enriched in basic and acidic residues. 3 disordered regions span residues 185 to 247 (ERGL…GDYE), 286 to 392 (GMME…HKRH), and 416 to 476 (NDGE…SRDA). Residues 197–385 (SDRISSLGSQ…QSFDSSSPPT (189 aa)) are binding to ABL SH2-domain. A compositionally biased stretch (polar residues) spans 199-208 (RISSLGSQAM). 4 positions are modified to phosphoserine: Ser-202, Ser-215, Ser-222, and Ser-236. At Tyr-246 the chain carries Phosphotyrosine; by FES. Low complexity-rich tracts occupy residues 346–356 (SSGQSSRVSPS) and 369–382 (SPSQ…DSSS). 3 positions are modified to phosphoserine: Ser-356, Ser-377, and Ser-382. Thr-385 is subject to Phosphothreonine. Over residues 441–451 (DRAEEQRRHQD) the composition is skewed to basic and acidic residues. Residues Ser-459 and Ser-463 each carry the phosphoserine modification. At Arg-471 the chain carries Omega-N-methylarginine. Ser-473 and Ser-488 each carry phosphoserine. One can recognise a DH domain in the interval 498–691 (MRKWVLSGIL…QNFLSSINEE (194 aa)). At Tyr-554 the chain carries Phosphotyrosine. Position 641 is a phosphothreonine (Thr-641). Tyr-644 carries the post-translational modification Phosphotyrosine. Thr-693 carries the phosphothreonine modification. The region spanning 708–866 (QLLKDSFMVE…WRENIREQQK (159 aa)) is the PH domain. The 128-residue stretch at 893–1020 (HSIPLTINKE…QDRDWQRTVI (128 aa)) folds into the C2 domain. The residue at position 894 (Ser-894) is a Phosphoserine. A Rho-GAP domain is found at 1054-1248 (VKIAVVTKRE…VMSQVQVLLY (195 aa)). The residue at position 1264 (Ser-1264) is a Phosphoserine.

As to quaternary structure, homotetramer. Interacts with PDZK1. May interact with CCPG1. Interacts with FES/FPS, ABL1, PIK3R1 and GRB2. Interacts with HCK. Interacts with SH2D5. Interacts with DLG4. Autophosphorylated. Phosphorylated by FES/FPS on tyrosine residues, leading to down-regulation of the BCR kinase activity. Phosphorylation at Tyr-177 by HCK is important for interaction with GRB2.

Its subcellular location is the postsynaptic density. It localises to the cell projection. The protein localises to the dendritic spine. It is found in the axon. The protein resides in the synapse. It catalyses the reaction L-seryl-[protein] + ATP = O-phospho-L-seryl-[protein] + ADP + H(+). The catalysed reaction is L-threonyl-[protein] + ATP = O-phospho-L-threonyl-[protein] + ADP + H(+). In terms of biological role, protein with a unique structure having two opposing regulatory activities toward small GTP-binding proteins. The C-terminus is a GTPase-activating protein (GAP) domain which stimulates GTP hydrolysis by RAC1, RAC2 and CDC42. Accelerates the intrinsic rate of GTP hydrolysis of RAC1 or CDC42, leading to down-regulation of the active GTP-bound form. The central Dbl homology (DH) domain functions as guanine nucleotide exchange factor (GEF) that modulates the GTPases CDC42, RHOA and RAC1. Promotes the conversion of CDC42, RHOA and RAC1 from the GDP-bound to the GTP-bound form. The amino terminus contains an intrinsic kinase activity. Functions as an important negative regulator of neuronal RAC1 activity. Regulates macrophage functions such as CSF1-directed motility and phagocytosis through the modulation of RAC1 activity. Plays a major role as a RHOA GEF in keratinocytes being involved in focal adhesion formation and keratinocyte differentiation. The chain is Breakpoint cluster region protein from Homo sapiens (Human).